A 615-amino-acid polypeptide reads, in one-letter code: Protein DBF4 homolog B (615 aa).

Residues Ala43 to Ser133 form the BRCT domain. Disordered regions lie at residues Arg93–Pro141 and Phe264–Met293. Residues His275–Pro284 show a composition bias toward basic and acidic residues. Residues Pro294 to Ser343 form a DBF4-type zinc finger. 4 residues coordinate Zn(2+): Cys301, Cys304, His314, and His320. A disordered region spans residues Thr371 to Arg407.

As to quaternary structure, forms a complex with CDC7. Note that CDC7 forms distinct complex either with DBF4/DBF4A or DBF4B. Such complexes are stable upon replication stress. In terms of processing, phosphorylated. Widely expressed. Highly expressed in testis.

It localises to the nucleus. Regulatory subunit for CDC7 which activates its kinase activity thereby playing a central role in DNA replication and cell proliferation. Required for progression of S and M phases. The complex CDC7-DBF4B selectively phosphorylates MCM2 subunit at 'Ser-40' and then is involved in regulating the initiation of DNA replication during cell cycle. In Homo sapiens (Human), this protein is Protein DBF4 homolog B (DBF4B).